A 260-amino-acid polypeptide reads, in one-letter code: uncharacterized protein (260 aa).

Positions 1–22 (MGYIKRIGLYISIFILIVMVAG) are cleaved as a signal peptide. Cys23 carries the N-palmitoyl cysteine lipid modification. A lipid anchor (S-diacylglycerol cysteine) is attached at Cys23.

This sequence belongs to the staphylococcal tandem lipoprotein family.

The protein localises to the cell membrane. This is an uncharacterized protein from Staphylococcus aureus (strain bovine RF122 / ET3-1).